A 548-amino-acid chain; its full sequence is 5-aminolevulinate synthase, mitochondrial (548 aa).

The N-terminal 22 residues, 1–22 (MQRSIFARFGNSSAAVSTLNRL), are a transit peptide targeting the mitochondrion. Positions 91, 204, and 223 each coordinate substrate. Pyridoxal 5'-phosphate is bound by residues Ser256, His284, and Thr334. Lys337 is a catalytic residue. At Lys337 the chain carries N6-(pyridoxal phosphate)lysine. 2 residues coordinate pyridoxal 5'-phosphate: Thr366 and Thr367. Thr452 contacts substrate.

Belongs to the class-II pyridoxal-phosphate-dependent aminotransferase family. As to quaternary structure, homodimer. Interacts with MCX1. Pyridoxal 5'-phosphate serves as cofactor.

Its subcellular location is the mitochondrion matrix. The catalysed reaction is succinyl-CoA + glycine + H(+) = 5-aminolevulinate + CO2 + CoA. The protein operates within porphyrin-containing compound metabolism; protoporphyrin-IX biosynthesis; 5-aminolevulinate from glycine: step 1/1. With respect to regulation, ihnhibited by hemin. In terms of biological role, catalyzes the synthesis of 5-aminolevulinate (ALA) from succinyl-CoA and glycine, the first and rate-limiting step in heme biosynthesis. The chain is 5-aminolevulinate synthase, mitochondrial from Saccharomyces cerevisiae (strain ATCC 204508 / S288c) (Baker's yeast).